The primary structure comprises 305 residues: MYDIAPRRSGSRPGPGRDKTRRRSRFSAAGNPGVERRASRKSLPSHARRLELCLHERRRYRGFFAALAQTPSEEIAIVRSLSVPLVKTTPVSLPFSLDQTVADNCLTLSGMGYYLGIGGCCPACSAGDGRLATVSREALILAFVQQINTIFEHRTFLASLVVLADRHSTPLQDLLADTLGQPELFFVHTILRGGGACDPRFLFYPDPTYGGHMLYVIFPGTSAHLHYRLIDRMLTACPGYRFAAHVWQSTFVLVVRRNAEKPADAEIPTVSAADIYCKMRDISFDGGLMLEYQRLYATFDEFPPP.

The segment at 1 to 42 (MYDIAPRRSGSRPGPGRDKTRRRSRFSAAGNPGVERRASRKS) is disordered. The CCCH-type zinc finger occupies 105–224 (CLTLSGMGYY…YVIFPGTSAH (120 aa)).

The protein belongs to the herpesviridae NEC1 protein family. In terms of assembly, forms a heterohexameric complex with NEC2. Interacts with capsid vertex specific component 2/CVC2; this interaction directs the capsid to the host inner nuclear membrane to initiate budding. Phosphorylated at serine residues in the N-terminus. This phosphorylation regulates the localization within the inner nuclear membrane.

The protein localises to the host nucleus inner membrane. In terms of biological role, plays an essential role in virion nuclear egress, the first step of virion release from infected cell. Within the host nucleus, NEC1 interacts with the newly formed capsid through the vertexes and directs it to the inner nuclear membrane by associating with NEC2. Induces the budding of the capsid at the inner nuclear membrane as well as its envelopment into the perinuclear space. There, the NEC1/NEC2 complex promotes the fusion of the enveloped capsid with the outer nuclear membrane and the subsequent release of the viral capsid into the cytoplasm where it will reach the secondary budding sites in the host Golgi or trans-Golgi network. This Human herpesvirus 2 (strain HG52) (HHV-2) protein is Nuclear egress protein 1.